Consider the following 973-residue polypeptide: 109 kDa U5 small nuclear ribonucleoprotein component GFL (973 aa).

The tract at residues 1-40 is disordered; sequence MDGSLYGECGNYIGPEIESDRDSDDSVEDEDLQEPGGSNG. Residues 17-33 show a composition bias toward acidic residues; the sequence is IESDRDSDDSVEDEDLQ. The tr-type G domain maps to 122–408; sequence ALVRNVALVG…LGVTLSNSAY (287 aa). Positions 131 to 138 are G1; that stretch reads GHLQHGKT. 131-138 contributes to the GTP binding site; that stretch reads GHLQHGKT. Residues 175-179 form a G2 region; it reads NISIK. A G3 region spans residues 201–204; the sequence is DTPG. GTP-binding positions include 201–205 and 255–258; these read DTPGN and NKVD. Residues 255-258 form a G4 region; sequence NKVD. A G5 region spans residues 381-383; it reads YSQ.

It belongs to the TRAFAC class translation factor GTPase superfamily. Classic translation factor GTPase family. In terms of tissue distribution, expressed in flower buds, open flowers and siliques. Expressed at low levels in rosettes leaves, cauline leaves and stems.

Its subcellular location is the nucleus speckle. Functionally, splicing factor involved in pre-mRNA splicing and component of the spliceosome. The polypeptide is 109 kDa U5 small nuclear ribonucleoprotein component GFL (Arabidopsis thaliana (Mouse-ear cress)).